The following is a 93-amino-acid chain: Phosphoribosyl-ATP pyrophosphatase (93 aa).

The protein belongs to the PRA-PH family.

The protein resides in the cytoplasm. The enzyme catalyses 1-(5-phospho-beta-D-ribosyl)-ATP + H2O = 1-(5-phospho-beta-D-ribosyl)-5'-AMP + diphosphate + H(+). The protein operates within amino-acid biosynthesis; L-histidine biosynthesis; L-histidine from 5-phospho-alpha-D-ribose 1-diphosphate: step 2/9. This chain is Phosphoribosyl-ATP pyrophosphatase, found in Mycobacterium avium (strain 104).